Here is a 197-residue protein sequence, read N- to C-terminus: Adenylate kinase (197 aa).

16–21 (GAGKGT) is an ATP binding site. The NMP stretch occupies residues 36–65 (STGDILRDHVARGTELGQQVKPILDAGHLV). Residues T37, R42, 63 to 65 (HLV), 90 to 93 (GFPR), and Q97 each bind AMP. The LID stretch occupies residues 131-147 (ERGNQAQARGEAVRSDD). R132 is an ATP binding site. Positions 144 and 155 each coordinate AMP. G183 lines the ATP pocket.

The protein belongs to the adenylate kinase family. Monomer.

Its subcellular location is the cytoplasm. It carries out the reaction AMP + ATP = 2 ADP. Its pathway is purine metabolism; AMP biosynthesis via salvage pathway; AMP from ADP: step 1/1. Its function is as follows. Catalyzes the reversible transfer of the terminal phosphate group between ATP and AMP. Plays an important role in cellular energy homeostasis and in adenine nucleotide metabolism. The chain is Adenylate kinase from Deinococcus deserti (strain DSM 17065 / CIP 109153 / LMG 22923 / VCD115).